The primary structure comprises 419 residues: Haloacid dehalogenase-like hydrolase domain-containing 5 (419 aa).

The N-terminal stretch at 1-15 (MAALAGLGVLGAGRH) is a signal peptide.

It belongs to the HAD-like hydrolase superfamily.

This Mus musculus (Mouse) protein is Haloacid dehalogenase-like hydrolase domain-containing 5.